The primary structure comprises 158 residues: UPF0145 protein Psyc_1853 (158 aa).

Residues 113–122 are compositionally biased toward polar residues; sequence IYQSSNQPPS. The segment at 113–158 is disordered; the sequence is IYQSSNQPPSHHSGHSQYEEPVPSAAQPSTTAQANDDLPRFNPFGE.

Belongs to the UPF0145 family.

This is UPF0145 protein Psyc_1853 from Psychrobacter arcticus (strain DSM 17307 / VKM B-2377 / 273-4).